The sequence spans 361 residues: Replication factor C subunit 3 (361 aa).

A compositionally biased stretch (low complexity) spans 1 to 28 (MAGATAATPMDIDAAAPPPGAAAKGKAP). The tract at residues 1–39 (MAGATAATPMDIDAAAPPPGAAAKGKAPLSSTPGGRAAP) is disordered. 77–84 (YGPPGTGK) is an ATP binding site.

The protein belongs to the activator 1 small subunits family. In terms of assembly, heterotetramer of subunits RFC2, RFC3, RFC4 and RFC5 that can form a complex with RFC1. Expressed in roots, leaves, shoot apical meristem (SAM), flag leaves and panicles.

The protein resides in the nucleus. Its function is as follows. May be involved in DNA replication and thus regulate cell proliferation. In Oryza sativa subsp. japonica (Rice), this protein is Replication factor C subunit 3 (RFC3).